The sequence spans 43 residues: Protein PsbN (43 aa).

The chain crosses the membrane as a helical span at residues 5-27 (TLVAIFISGSLVSFTGYALYTAF).

The protein belongs to the PsbN family.

It localises to the plastid. Its subcellular location is the chloroplast thylakoid membrane. In terms of biological role, may play a role in photosystem I and II biogenesis. This is Protein PsbN from Nelumbo lutea (American lotus).